The chain runs to 365 residues: UPF0324 membrane protein Cj0999c (365 aa).

A run of 11 helical transmembrane segments spans residues 12–34 (IVRS…MYLS), 44–63 (HLAA…PWFF), 83–100 (LGIV…LLSV), 105–127 (FLLS…TKIF), 134–153 (SMLV…LALE), 163–185 (GILA…PIAF), 197–219 (AMGV…AEMA), 234–256 (VIIK…YFFA), 269–288 (SITI…LNTY), 303–325 (IISL…LGLQ), and 338–360 (VFGL…TLAF).

This sequence belongs to the UPF0324 family.

The protein localises to the cell membrane. This is UPF0324 membrane protein Cj0999c from Campylobacter jejuni subsp. jejuni serotype O:2 (strain ATCC 700819 / NCTC 11168).